A 429-amino-acid chain; its full sequence is Enolase (429 aa).

Gln-162 serves as a coordination point for (2R)-2-phosphoglycerate. The active-site Proton donor is Glu-204. The Mg(2+) site is built by Asp-241, Glu-288, and Asp-315. Residues Lys-340, Arg-369, Ser-370, and Lys-391 each contribute to the (2R)-2-phosphoglycerate site. The Proton acceptor role is filled by Lys-340.

This sequence belongs to the enolase family. It depends on Mg(2+) as a cofactor.

It localises to the cytoplasm. The protein resides in the secreted. It is found in the cell surface. The catalysed reaction is (2R)-2-phosphoglycerate = phosphoenolpyruvate + H2O. It participates in carbohydrate degradation; glycolysis; pyruvate from D-glyceraldehyde 3-phosphate: step 4/5. Functionally, catalyzes the reversible conversion of 2-phosphoglycerate (2-PG) into phosphoenolpyruvate (PEP). It is essential for the degradation of carbohydrates via glycolysis. In Christiangramia forsetii (strain DSM 17595 / CGMCC 1.15422 / KT0803) (Gramella forsetii), this protein is Enolase.